Consider the following 628-residue polypeptide: Chaperone protein DnaK (628 aa).

Phosphothreonine; by autocatalysis is present on Thr-195. The disordered stretch occupies residues Gln-545–Glu-628. Residues Asp-555–Arg-591 show a composition bias toward basic and acidic residues. Residues Ala-596–Gly-612 show a composition bias toward low complexity. A compositionally biased stretch (basic and acidic residues) spans Lys-614–Glu-628.

The protein belongs to the heat shock protein 70 family.

Functionally, acts as a chaperone. The protein is Chaperone protein DnaK of Deinococcus deserti (strain DSM 17065 / CIP 109153 / LMG 22923 / VCD115).